A 369-amino-acid polypeptide reads, in one-letter code: Septin-5 (369 aa).

Residue Thr13 is modified to Phosphothreonine. In terms of domain architecture, Septin-type G spans 41–314 (KGFDFTLMVA…ENYRAHCIQQ (274 aa)). The tract at residues 51 to 58 (GESGLGKS) is G1 motif. GTP is bound by residues 51-58 (GESGLGKS), Thr85, and Gly111. A G3 motif region spans residues 108 to 111 (DTPG). At Arg168 the chain carries Omega-N-methylarginine. Residues 189-192 (AKAD) are G4 motif. 190 to 198 (KADCLVPSE) lines the GTP pocket. A Phosphoserine modification is found at Ser225. Residues Gly248 and Arg263 each contribute to the GTP site. Ser327 carries the post-translational modification Phosphoserine. Thr336 bears the Phosphothreonine mark. Positions 338–369 (DAETEKLIRMKDEELRRMQEMLQRMKQQMQDQ) form a coiled coil.

It belongs to the TRAFAC class TrmE-Era-EngA-EngB-Septin-like GTPase superfamily. Septin GTPase family. In terms of assembly, septins polymerize into heterooligomeric protein complexes that form filaments, and can associate with cellular membranes, actin filaments and microtubules. GTPase activity is required for filament formation. Interacts with SEPTIN2 and SEPTIN5. In platelets, associated with a complex containing STX4. Interacts with PRKN; this interaction leads to SEPTIN5 ubiquitination and degradation. Interacts with DYRK1A. Interacts with STX1A; in the cerebellar cortex. Phosphorylated by DYRK1A. In platelets, phosphorylated in response to thrombin, phorbol-12-myristate-13-acetate and collagen. As to expression, expressed at high levels in the CNS, as well as in heart and platelets (at protein level).

The protein resides in the cytoplasm. It localises to the cytoskeleton. In terms of biological role, filament-forming cytoskeletal GTPase. May play a role in cytokinesis (Potential). May play a role in platelet secretion. The sequence is that of Septin-5 from Homo sapiens (Human).